A 255-amino-acid chain; its full sequence is Thiazole synthase (255 aa).

The Schiff-base intermediate with DXP role is filled by Lys-96. 1-deoxy-D-xylulose 5-phosphate-binding positions include Gly-157, 184–185, and 206–207; these read AG and NT.

It belongs to the ThiG family. In terms of assembly, homotetramer. Forms heterodimers with either ThiH or ThiS.

The protein localises to the cytoplasm. It catalyses the reaction [ThiS sulfur-carrier protein]-C-terminal-Gly-aminoethanethioate + 2-iminoacetate + 1-deoxy-D-xylulose 5-phosphate = [ThiS sulfur-carrier protein]-C-terminal Gly-Gly + 2-[(2R,5Z)-2-carboxy-4-methylthiazol-5(2H)-ylidene]ethyl phosphate + 2 H2O + H(+). Its pathway is cofactor biosynthesis; thiamine diphosphate biosynthesis. Catalyzes the rearrangement of 1-deoxy-D-xylulose 5-phosphate (DXP) to produce the thiazole phosphate moiety of thiamine. Sulfur is provided by the thiocarboxylate moiety of the carrier protein ThiS. In vitro, sulfur can be provided by H(2)S. The sequence is that of Thiazole synthase from Clostridium acetobutylicum (strain ATCC 824 / DSM 792 / JCM 1419 / IAM 19013 / LMG 5710 / NBRC 13948 / NRRL B-527 / VKM B-1787 / 2291 / W).